A 225-amino-acid polypeptide reads, in one-letter code: Probable GTP-binding protein EngB (225 aa).

The EngB-type G domain maps to 40–224 (GPPEVAFAGR…RAAIVHAVTA (185 aa)). GTP is bound by residues 48-55 (GRSNVGKS), 75-79 (GRTQE), 102-105 (DMPG), 169-172 (TKAD), and 203-205 (TSS). Positions 55 and 77 each coordinate Mg(2+).

Belongs to the TRAFAC class TrmE-Era-EngA-EngB-Septin-like GTPase superfamily. EngB GTPase family. Requires Mg(2+) as cofactor.

Necessary for normal cell division and for the maintenance of normal septation. The sequence is that of Probable GTP-binding protein EngB from Chelativorans sp. (strain BNC1).